Consider the following 239-residue polypeptide: Small ribosomal subunit protein uS3c (239 aa).

In terms of domain architecture, KH type-2 spans 43–139 (IKNYIQKNRK…RLNISIEKVK (97 aa)). The disordered stretch occupies residues 50-80 (NRKKSSNRKLESDSSSEVITHNRKNDSGSSS).

The protein belongs to the universal ribosomal protein uS3 family. Part of the 30S ribosomal subunit.

It localises to the plastid. The protein resides in the chloroplast. This Lolium perenne (Perennial ryegrass) protein is Small ribosomal subunit protein uS3c (rps3).